The chain runs to 140 residues: Large ribosomal subunit protein uL11 (140 aa).

This sequence belongs to the universal ribosomal protein uL11 family. Part of the ribosomal stalk of the 50S ribosomal subunit. Interacts with L10 and the large rRNA to form the base of the stalk. L10 forms an elongated spine to which L12 dimers bind in a sequential fashion forming a multimeric L10(L12)X complex. One or more lysine residues are methylated.

Forms part of the ribosomal stalk which helps the ribosome interact with GTP-bound translation factors. This Nitratidesulfovibrio vulgaris (strain DSM 19637 / Miyazaki F) (Desulfovibrio vulgaris) protein is Large ribosomal subunit protein uL11.